The sequence spans 963 residues: Exportin-T (963 aa).

Position 1 is an N-acetylmethionine (methionine 1). Lysine 635 carries the N6-acetyllysine modification.

It belongs to the exportin family. Found in a complex with XPOT, Ran and tRNA. Probably found in a complex with nucleoporins. Interacts with Ran and tRNA in a GTP-dependent manner.

Its subcellular location is the nucleus. It is found in the cytoplasm. In terms of biological role, mediates the nuclear export of aminoacylated tRNAs. In the nucleus binds to tRNA and to the GTPase Ran in its active GTP-bound form. Docking of this trimeric complex to the nuclear pore complex (NPC) is mediated through binding to nucleoporins. Upon transit of a nuclear export complex into the cytoplasm, disassembling of the complex and hydrolysis of Ran-GTP to Ran-GDP (induced by RANBP1 and RANGAP1, respectively) cause release of the tRNA from the export receptor. XPOT then return to the nuclear compartment and mediate another round of transport. The directionality of nuclear export is thought to be conferred by an asymmetric distribution of the GTP- and GDP-bound forms of Ran between the cytoplasm and nucleus. The polypeptide is Exportin-T (Xpot) (Mus musculus (Mouse)).